The primary structure comprises 322 residues: Sideroflexin-2 (322 aa).

Met1 is modified (N-acetylmethionine). The next 5 membrane-spanning stretches (helical) occupy residues 100-122 (MIIT…WQWV), 142-164 (SVRQ…AVGM), 174-192 (LVGR…CVNI), 228-250 (VVIS…MERL), and 265-287 (PLQV…GLFP).

This sequence belongs to the sideroflexin family. As to expression, widely expressed, highest levels in kidney, liver, and pancreas.

Its subcellular location is the mitochondrion inner membrane. It is found in the mitochondrion outer membrane. The catalysed reaction is L-serine(in) = L-serine(out). Its function is as follows. Mitochondrial amino-acid transporter that mediates transport of serine into mitochondria. Involved in mitochondrial iron homeostasis by regulating heme biosynthesis. The polypeptide is Sideroflexin-2 (Homo sapiens (Human)).